A 536-amino-acid polypeptide reads, in one-letter code: Cytochrome P450 monooxygenase pbrC (536 aa).

A helical transmembrane segment spans residues 20–39; the sequence is VMLPALVGFAFLIYQAFFAI. Heme is bound at residue cysteine 479.

Belongs to the cytochrome P450 family. Heme serves as cofactor.

The protein localises to the membrane. It functions in the pathway secondary metabolite biosynthesis; terpenoid biosynthesis. In terms of biological role, cytochrome P450 monooxygenase; part of the gene cluster that mediates the biosynthesis of the sesquiterpenoid aspterric acid (AA), an inhibitor of dihydroxy-acid dehydratase (DHAD) effective as an herbicide. PbrC catalyzes the third and last step within the pathway and converts the alpha-epoxy carboxylate intermediate produced by the cytochrome P450 monooxygenase pbrB from (-)daucane into the tricyclic aspterric acid. The polypeptide is Cytochrome P450 monooxygenase pbrC (Penicillium brasilianum).